The sequence spans 312 residues: Non-structural protein 12A (312 aa).

Residues 1–23 are compositionally biased toward low complexity; that stretch reads MFKSGSGSLKRSGSISSVKSFSG. 3 disordered regions span residues 1–37, 62–97, and 112–159; these read MFKS…RGSV, FVPE…YNQN, and SSKG…SHGT. The segment covering 63-73 has biased composition (basic and acidic residues); sequence VPEKTKSEGNL. A compositionally biased stretch (polar residues) spans 74–97; that stretch reads KNKSSVITGNFGSSGPTNAHYNQN. Residues 122-134 are compositionally biased toward basic and acidic residues; that stretch reads DARHTATDSRLSQ. Residues 135 to 154 show a composition bias toward polar residues; the sequence is EVKQPFSEENASGNDLNTGR.

The protein belongs to the phytoreovirus non-structural protein Pns12A family.

Its subcellular location is the host cytoplasm. Its function is as follows. Constituent of viral factories. The chain is Non-structural protein 12A from Rice dwarf virus (isolate O) (RDV).